Consider the following 758-residue polypeptide: Ferrichrome receptor FcuA (758 aa).

The N-terminal stretch at 1–36 (MNQTISSRAPQKRLAPRLLCVMIGAALGTLSASSWA) is a signal peptide. Positions 66–73 (DTITVVGA) match the TonB box motif. Residues 106-216 (DARNVPFNVI…VGGMINLEPK (111 aa)) enclose the TBDR plug domain. Positions 221–758 (TPLTRVTVDY…ALKLSVSMDF (538 aa)) constitute a TBDR beta-barrel domain. A TonB C-terminal box motif is present at residues 741–758 (YIYQGDPRALKLSVSMDF).

The protein belongs to the TonB-dependent receptor family.

Its subcellular location is the cell outer membrane. Functionally, receptor for the hydroxamate siderophore, ferrichrome. Binds also to most other ferrichrome derivatives except enantio ferrichrome and ferric rhodotorulate. This Yersinia enterocolitica protein is Ferrichrome receptor FcuA (fcuA).